A 78-amino-acid chain; its full sequence is Short neurotoxin SNTX26 (78 aa).

The N-terminal stretch at 1–21 (MKTLLLTFLVVTIVCLDLGYT) is a signal peptide. 4 cysteine pairs are disulfide-bonded: Cys24-Cys40, Cys33-Cys58, Cys62-Cys70, and Cys71-Cys76.

The protein belongs to the three-finger toxin family. Short-chain subfamily. Expressed by the venom gland.

Its subcellular location is the secreted. This three-finger toxin binds and inhibits the nicotinic acetylcholine receptor (nAChR). The polypeptide is Short neurotoxin SNTX26 (Ophiophagus hannah (King cobra)).